The sequence spans 408 residues: Aminoacylase-1A (408 aa).

Position 80 (H80) interacts with Zn(2+). Residue D82 is part of the active site. D113 is a binding site for Zn(2+). E147 (proton acceptor) is an active-site residue. The Zn(2+) site is built by E148, E175, and H373. At S408 the chain carries Phosphoserine.

Belongs to the peptidase M20A family. Homodimer. Requires Zn(2+) as cofactor. Post-translationally, the N-terminus is blocked.

Its subcellular location is the cytoplasm. It carries out the reaction an N-acyl-L-amino acid + H2O = an L-alpha-amino acid + a carboxylate. It catalyses the reaction an N-acetyl-L-cysteine-S-conjugate + H2O = an S-substituted L-cysteine + acetate. Its function is as follows. Involved in the hydrolysis of N-acylated or N-acetylated amino acids (except L-aspartate). The sequence is that of Aminoacylase-1A (Acy1a) from Rattus norvegicus (Rat).